The chain runs to 690 residues: Translation initiation factor IF-2 (690 aa).

In terms of domain architecture, tr-type G spans 178–346 (PRPPVVTVMG…MILLVAEMNE (169 aa)). The segment at 187–194 (GHVDHGKT) is G1. Residue 187–194 (GHVDHGKT) participates in GTP binding. Residues 212-216 (GITQS) form a G2 region. Positions 233–236 (DTPG) are G3. Residues 233–237 (DTPGH) and 287–290 (NKID) contribute to the GTP site. Residues 287–290 (NKID) form a G4 region. Positions 324–326 (SAR) are G5.

It belongs to the TRAFAC class translation factor GTPase superfamily. Classic translation factor GTPase family. IF-2 subfamily.

It is found in the cytoplasm. Its function is as follows. One of the essential components for the initiation of protein synthesis. Protects formylmethionyl-tRNA from spontaneous hydrolysis and promotes its binding to the 30S ribosomal subunits. Also involved in the hydrolysis of GTP during the formation of the 70S ribosomal complex. The chain is Translation initiation factor IF-2 from Thermotoga sp. (strain RQ2).